The primary structure comprises 930 residues: Semaphorin-6C (930 aa).

A signal peptide spans 1 to 24 (MPRAPHFMPLLLLLLLLSLPHTQA). Over 25–604 (AFPQDPLPLL…ASASRSVPIP (580 aa)) the chain is Extracellular. Positions 30-516 (PLPLLISDLQ…FSGCIVYLPL (487 aa)) constitute a Sema domain. The N-linked (GlcNAc...) asparagine glycan is linked to N70. 4 disulfide bridges follow: C111-C121, C139-C148, C262-C373, and C287-C332. N286 is a glycosylation site (N-linked (GlcNAc...) asparagine). N437 carries N-linked (GlcNAc...) asparagine glycosylation. 4 disulfides stabilise this stretch: C479–C510, C519–C537, C525–C570, and C529–C545. The tract at residues 554–593 (TDVDQAGNQESMEHGDCQDGATGSQSGPGDSAYGVRRDLP) is disordered. The chain crosses the membrane as a helical span at residues 605–625 (LLLASVAAAFALGASVSGLLV). Over 626–930 (SCACRRAHRR…AVPNGGRFNF (305 aa)) the chain is Cytoplasmic. Disordered regions lie at residues 654–674 (LARL…GDAV), 716–761 (GDPW…PGQA), 775–882 (HGPQ…PGKH), and 908–930 (SLKP…RFNF). Over residues 829-844 (ASAPARPALSAPAPRL) the composition is skewed to low complexity.

This sequence belongs to the semaphorin family. In terms of tissue distribution, in adult tissues, expressed only in skeletal muscle.

It is found in the cell membrane. Functionally, shows growth cone collapsing activity on dorsal root ganglion (DRG) neurons in vitro. May be a stop signal for the DRG neurons in their target areas, and possibly also for other neurons. May also be involved in the maintenance and remodeling of neuronal connections. In Homo sapiens (Human), this protein is Semaphorin-6C (SEMA6C).